Consider the following 244-residue polypeptide: Phosphoadenosine 5'-phosphosulfate reductase (244 aa).

The Nucleophile; cysteine thiosulfonate intermediate role is filled by Cys-239.

The protein belongs to the PAPS reductase family. CysH subfamily.

The protein resides in the cytoplasm. It carries out the reaction [thioredoxin]-disulfide + sulfite + adenosine 3',5'-bisphosphate + 2 H(+) = [thioredoxin]-dithiol + 3'-phosphoadenylyl sulfate. It functions in the pathway sulfur metabolism; hydrogen sulfide biosynthesis; sulfite from sulfate: step 3/3. Functionally, catalyzes the formation of sulfite from phosphoadenosine 5'-phosphosulfate (PAPS) using thioredoxin as an electron donor. This chain is Phosphoadenosine 5'-phosphosulfate reductase, found in Shigella dysenteriae serotype 1 (strain Sd197).